A 257-amino-acid chain; its full sequence is 3-methyl-2-oxobutanoate hydroxymethyltransferase (257 aa).

Residues Asp42 and Asp86 each contribute to the Mg(2+) site. Residues 42–43 (DS), Asp86, and Lys116 each bind 3-methyl-2-oxobutanoate. Glu118 serves as a coordination point for Mg(2+). Glu185 acts as the Proton acceptor in catalysis.

Belongs to the PanB family. As to quaternary structure, homodecamer; pentamer of dimers. Mg(2+) serves as cofactor.

Its subcellular location is the cytoplasm. It catalyses the reaction 3-methyl-2-oxobutanoate + (6R)-5,10-methylene-5,6,7,8-tetrahydrofolate + H2O = 2-dehydropantoate + (6S)-5,6,7,8-tetrahydrofolate. The protein operates within cofactor biosynthesis; (R)-pantothenate biosynthesis; (R)-pantoate from 3-methyl-2-oxobutanoate: step 1/2. In terms of biological role, catalyzes the reversible reaction in which hydroxymethyl group from 5,10-methylenetetrahydrofolate is transferred onto alpha-ketoisovalerate to form ketopantoate. This Prochlorococcus marinus (strain MIT 9515) protein is 3-methyl-2-oxobutanoate hydroxymethyltransferase.